Reading from the N-terminus, the 1031-residue chain is Telomerase reverse transcriptase (1031 aa).

Residues 498–852 (KEVEEWKKSL…DYCDWIGISI (355 aa)) form the Reverse transcriptase domain. Residues Asp603, Asp781, and Asp782 each coordinate Mg(2+).

This sequence belongs to the reverse transcriptase family. Telomerase subfamily. As to quaternary structure, component of the telomerase holoenzyme complex composed minimally of the catalytic subunit p123 and the telomerase RNA template component.

It localises to the nucleus. It is found in the chromosome. Its subcellular location is the telomere. The enzyme catalyses DNA(n) + a 2'-deoxyribonucleoside 5'-triphosphate = DNA(n+1) + diphosphate. In terms of biological role, telomerase is a ribonucleoprotein enzyme essential for the replication of chromosome termini in most eukaryotes. It elongates telomeres. It is a reverse transcriptase that adds simple sequence repeats to chromosome ends by copying a template sequence within the RNA component of the enzyme. The sequence is that of Telomerase reverse transcriptase from Euplotes aediculatus (Ciliate).